The following is a 173-amino-acid chain: Co-chaperone protein HscB homolog (173 aa).

Residues 5-77 (CHFALFELQP…PKRARYLLAM (73 aa)) form the J domain.

Belongs to the HscB family. In terms of assembly, interacts with HscA and stimulates its ATPase activity.

Co-chaperone involved in the maturation of iron-sulfur cluster-containing proteins. Seems to help targeting proteins to be folded toward HscA. The chain is Co-chaperone protein HscB homolog from Pseudomonas fluorescens (strain SBW25).